We begin with the raw amino-acid sequence, 1328 residues long: DNA-directed RNA polymerase subunit beta (1328 aa).

This sequence belongs to the RNA polymerase beta chain family. As to quaternary structure, the RNAP catalytic core consists of 2 alpha, 1 beta, 1 beta' and 1 omega subunit. When a sigma factor is associated with the core the holoenzyme is formed, which can initiate transcription.

It catalyses the reaction RNA(n) + a ribonucleoside 5'-triphosphate = RNA(n+1) + diphosphate. Functionally, DNA-dependent RNA polymerase catalyzes the transcription of DNA into RNA using the four ribonucleoside triphosphates as substrates. This chain is DNA-directed RNA polymerase subunit beta, found in Karelsulcia muelleri (strain GWSS) (Sulcia muelleri).